A 126-amino-acid chain; its full sequence is Mating-type protein A1 (126 aa).

The homeobox DNA-binding region spans serine 70–lysine 126.

It belongs to the MATA1 family. In terms of assembly, binds DNA with a high specificity as a heterodimer of A1 and ALPHA2.

The protein localises to the nucleus. Its function is as follows. Mating type proteins are sequence specific DNA-binding proteins that act as master switches in yeast differentiation by controlling gene expression in a cell type-specific fashion. Transcriptional corepressor that, in a/alpha diploid cells, binds cooperatively with the ALPHA2 protein to a 21-bp DNA sequence termed the haploid-specific gene (hsg) operator, to repress transcription of haploid-specific genes and of MATALPHA1. This chain is Mating-type protein A1 (MATA1), found in Saccharomyces cerevisiae (Baker's yeast).